Here is a 433-residue protein sequence, read N- to C-terminus: Glutamate-1-semialdehyde 2,1-aminomutase (433 aa).

Residue K271 is modified to N6-(pyridoxal phosphate)lysine.

Belongs to the class-III pyridoxal-phosphate-dependent aminotransferase family. HemL subfamily. Homodimer. Requires pyridoxal 5'-phosphate as cofactor.

It is found in the cytoplasm. It carries out the reaction (S)-4-amino-5-oxopentanoate = 5-aminolevulinate. It functions in the pathway porphyrin-containing compound metabolism; protoporphyrin-IX biosynthesis; 5-aminolevulinate from L-glutamyl-tRNA(Glu): step 2/2. The protein operates within porphyrin-containing compound metabolism; chlorophyll biosynthesis. The polypeptide is Glutamate-1-semialdehyde 2,1-aminomutase (Prochlorococcus marinus (strain AS9601)).